The chain runs to 103 residues: Large ribosomal subunit protein bL21 (103 aa).

It belongs to the bacterial ribosomal protein bL21 family. In terms of assembly, part of the 50S ribosomal subunit. Contacts protein L20.

In terms of biological role, this protein binds to 23S rRNA in the presence of protein L20. In Actinobacillus pleuropneumoniae serotype 7 (strain AP76), this protein is Large ribosomal subunit protein bL21.